The sequence spans 316 residues: Probable cell division protein WhiA (316 aa).

The segment at residues 277–310 (SLEQLGRLADPPITKDAIAGRIRRLLQLAEKTEK) is a DNA-binding region (H-T-H motif).

Belongs to the WhiA family.

In terms of biological role, involved in cell division and chromosome segregation. This is Probable cell division protein WhiA from Bifidobacterium adolescentis (strain ATCC 15703 / DSM 20083 / NCTC 11814 / E194a).